The sequence spans 203 residues: Superoxide dismutase [Mn] (203 aa).

Mn(2+) is bound by residues histidine 27, histidine 81, aspartate 167, and histidine 171.

Belongs to the iron/manganese superoxide dismutase family. As to quaternary structure, homodimer. Mn(2+) is required as a cofactor.

It catalyses the reaction 2 superoxide + 2 H(+) = H2O2 + O2. Functionally, destroys superoxide anion radicals which are normally produced within the cells and which are toxic to biological systems. The sequence is that of Superoxide dismutase [Mn] (sodA) from Buchnera aphidicola subsp. Acyrthosiphon pisum (strain APS) (Acyrthosiphon pisum symbiotic bacterium).